We begin with the raw amino-acid sequence, 777 residues long: Shutoff protein (777 aa).

Disordered stretches follow at residues Met-1 to Val-55 and Pro-261 to Leu-283. A compositionally biased stretch (polar residues) spans Gln-9–Ser-20. Residues Val-250–Cys-314 form a binding to host EIF4G region. The RRM domain maps to Arg-317–Thr-435. Tyr-334 and Tyr-649 each carry phosphotyrosine; by host. Residues Pro-652–Pro-777 form a disordered region. A compositionally biased stretch (polar residues) spans Glu-656 to Ala-665. Gly residues predominate over residues Gly-728 to Gly-738. The span at Thr-753–Ser-763 shows a compositional bias: basic and acidic residues.

The protein belongs to the adenoviridae shutoff protein family. Monomer. Interacts with hexon protein; this interaction allows chaperoning and trimerization of hexon proteins. Interacts (via N-terminus) with host initiation factor EIF4G (via C-terminus). Interacts (via RRM domain) with viral mRNAs that contain the tripartite leader; this interaction allows ribosome shunting and expression of viral late mRNAs. In terms of processing, might be cleaved by the viral protease. Post-translationally, phosphorylated. Tyrosine phosphorylation enhances preferential binding to tripartite leader mRNAs and allows ribosome shunting. Methylated. Asymmetric dimethylation by host PRMT1 of the Arg/Gly-rich region may regulate shutoff protein binding to hexon and promote the capsid assembly in the nucleus.

It localises to the host cytoplasm. In terms of biological role, protein that inhibits host translation while promoting late viral translation by ribosome shunting. Blocks host cap-dependent translation by binding to eIF4G, displacing MKNK1 from cap initiation complexes and preventing EIF4E phosphorylation. Binds to the tripartite leader sequence of viral late mRNAs and recruits host eIF4G, PABPC1/poly-A binding protein and 40S ribosomes subunits on viral mRNAs, allowing ribosome shunting and efficient translation of late viral mRNAs even though conventional translation via ribosome scanning from the cap has been shut off in the host cell. During assembly, acts as a chaperone protein that helps hexon proteins assembly into trimers. This chain is Shutoff protein, found in Homo sapiens (Human).